Consider the following 393-residue polypeptide: Phosphoglycerate kinase (393 aa).

Substrate is bound by residues 21–23 (DFN), arginine 37, 60–63 (HLGR), arginine 119, and arginine 152. ATP-binding positions include lysine 202, glutamate 323, and 349 to 352 (GGDT).

Belongs to the phosphoglycerate kinase family. As to quaternary structure, monomer.

It is found in the cytoplasm. It catalyses the reaction (2R)-3-phosphoglycerate + ATP = (2R)-3-phospho-glyceroyl phosphate + ADP. It participates in carbohydrate degradation; glycolysis; pyruvate from D-glyceraldehyde 3-phosphate: step 2/5. The polypeptide is Phosphoglycerate kinase (Desulforudis audaxviator (strain MP104C)).